The chain runs to 104 residues: Nucleoid-associated protein PEPE_1483 (104 aa).

Positions 1-35 (MRGGMGNMQSMMRQMQKMQKKVTEEQEKLNQTEFT) are disordered. A compositionally biased stretch (low complexity) spans 8–17 (MQSMMRQMQK). Over residues 21–30 (KVTEEQEKLN) the composition is skewed to basic and acidic residues.

It belongs to the YbaB/EbfC family. Homodimer.

The protein localises to the cytoplasm. It localises to the nucleoid. Functionally, binds to DNA and alters its conformation. May be involved in regulation of gene expression, nucleoid organization and DNA protection. This is Nucleoid-associated protein PEPE_1483 from Pediococcus pentosaceus (strain ATCC 25745 / CCUG 21536 / LMG 10740 / 183-1w).